A 101-amino-acid polypeptide reads, in one-letter code: NAD(P)H-quinone oxidoreductase subunit 4L, chloroplastic (101 aa).

The next 3 helical transmembrane spans lie at 2-22 (MFEL…YGLI), 32-52 (ICLE…SDLF), and 61-81 (IFAI…LSIL).

The protein belongs to the complex I subunit 4L family. As to quaternary structure, NDH is composed of at least 16 different subunits, 5 of which are encoded in the nucleus.

It is found in the plastid. Its subcellular location is the chloroplast thylakoid membrane. The enzyme catalyses a plastoquinone + NADH + (n+1) H(+)(in) = a plastoquinol + NAD(+) + n H(+)(out). It carries out the reaction a plastoquinone + NADPH + (n+1) H(+)(in) = a plastoquinol + NADP(+) + n H(+)(out). Functionally, NDH shuttles electrons from NAD(P)H:plastoquinone, via FMN and iron-sulfur (Fe-S) centers, to quinones in the photosynthetic chain and possibly in a chloroplast respiratory chain. The immediate electron acceptor for the enzyme in this species is believed to be plastoquinone. Couples the redox reaction to proton translocation, and thus conserves the redox energy in a proton gradient. The chain is NAD(P)H-quinone oxidoreductase subunit 4L, chloroplastic from Lolium perenne (Perennial ryegrass).